A 930-amino-acid polypeptide reads, in one-letter code: Protocadherin gamma-B6 (930 aa).

The signal sequence occupies residues 1–30 (MGGSCAQRRRAGPRQVLFPLLLPFFYPTLC). 6 Cadherin domains span residues 31–133 (EPIR…APQF), 134–242 (DKKE…PPVF), 243–347 (SRDE…SPEI), 348–452 (IITS…APVF), 453–562 (DQTS…APRV), and 570–675 (DGSA…LPDL). At 31 to 691 (EPIRYSIPEE…SDPQAELQFY (661 aa)) the chain is on the extracellular side. Residues Asn304, Asn419, and Asn545 are each glycosylated (N-linked (GlcNAc...) asparagine). Residues 692–712 (LVVALALISVLFLLAVILAIA) traverse the membrane as a helical segment. At 713-930 (LRLRRSLSPT…KKKSGKKEKK (218 aa)) the chain is on the cytoplasmic side. Disordered regions lie at residues 791-839 (PHGG…WPNN) and 900-930 (ATLTNAAGKRDGKAPAGGNGNKKKSGKKEKK). Positions 800–839 (HPETLTSQAPPNTDWRFSQAQRPGTSGSQNGDDTGTWPNN) are enriched in polar residues. Positions 920-930 (NKKKSGKKEKK) are enriched in basic residues.

Its subcellular location is the cell membrane. Potential calcium-dependent cell-adhesion protein. May be involved in the establishment and maintenance of specific neuronal connections in the brain. This chain is Protocadherin gamma-B6 (PCDHGB6), found in Pan troglodytes (Chimpanzee).